Consider the following 399-residue polypeptide: Elongation factor Tu 2 (399 aa).

In terms of domain architecture, tr-type G spans 10-209 (KPHVNIGTIG…QVDGYIPEPE (200 aa)). Residues 19–26 (GHVDHGKT) are G1. Residue 19–26 (GHVDHGKT) participates in GTP binding. Mg(2+) is bound at residue Thr-26. The interval 60 to 64 (GITIA) is G2. The tract at residues 81-84 (DCPG) is G3. Residues 81-85 (DCPGH) and 136-139 (NKAD) each bind GTP. The G4 stretch occupies residues 136-139 (NKAD). The segment at 174-176 (SAL) is G5.

This sequence belongs to the TRAFAC class translation factor GTPase superfamily. Classic translation factor GTPase family. EF-Tu/EF-1A subfamily. Monomer.

The protein resides in the cytoplasm. The catalysed reaction is GTP + H2O = GDP + phosphate + H(+). Its function is as follows. GTP hydrolase that promotes the GTP-dependent binding of aminoacyl-tRNA to the A-site of ribosomes during protein biosynthesis. The protein is Elongation factor Tu 2 of Syntrophotalea carbinolica (strain DSM 2380 / NBRC 103641 / GraBd1) (Pelobacter carbinolicus).